The sequence spans 263 residues: Hydroxyethylthiazole kinase (263 aa).

Substrate is bound at residue methionine 45. ATP contacts are provided by arginine 121 and serine 167. Glycine 194 contributes to the substrate binding site.

This sequence belongs to the Thz kinase family. Mg(2+) serves as cofactor.

It catalyses the reaction 5-(2-hydroxyethyl)-4-methylthiazole + ATP = 4-methyl-5-(2-phosphooxyethyl)-thiazole + ADP + H(+). It functions in the pathway cofactor biosynthesis; thiamine diphosphate biosynthesis; 4-methyl-5-(2-phosphoethyl)-thiazole from 5-(2-hydroxyethyl)-4-methylthiazole: step 1/1. Functionally, catalyzes the phosphorylation of the hydroxyl group of 4-methyl-5-beta-hydroxyethylthiazole (THZ). This chain is Hydroxyethylthiazole kinase, found in Vibrio campbellii (strain ATCC BAA-1116).